Consider the following 449-residue polypeptide: Glutamyl-tRNA reductase (449 aa).

Substrate-binding positions include 58–61 (TCNR), S121, 126–128 (ETQ), and Q132. C59 acts as the Nucleophile in catalysis. 203 to 208 (GLGEMA) provides a ligand contact to NADP(+).

The protein belongs to the glutamyl-tRNA reductase family. As to quaternary structure, homodimer.

The enzyme catalyses (S)-4-amino-5-oxopentanoate + tRNA(Glu) + NADP(+) = L-glutamyl-tRNA(Glu) + NADPH + H(+). The protein operates within porphyrin-containing compound metabolism; protoporphyrin-IX biosynthesis; 5-aminolevulinate from L-glutamyl-tRNA(Glu): step 1/2. Functionally, catalyzes the NADPH-dependent reduction of glutamyl-tRNA(Glu) to glutamate 1-semialdehyde (GSA). The sequence is that of Glutamyl-tRNA reductase from Helicobacter pylori (strain Shi470).